The following is a 294-amino-acid chain: Pyridoxal 5'-phosphate synthase subunit PdxS (294 aa).

Aspartate 24 provides a ligand contact to D-ribose 5-phosphate. Lysine 81 (schiff-base intermediate with D-ribose 5-phosphate) is an active-site residue. Glycine 153 contacts D-ribose 5-phosphate. Residue arginine 165 participates in D-glyceraldehyde 3-phosphate binding. D-ribose 5-phosphate contacts are provided by residues glycine 214 and 235 to 236 (GS).

The protein belongs to the PdxS/SNZ family. In terms of assembly, homohexamer and homododecamer. In the presence of PdxT, forms a dodecamer of heterodimers.

It catalyses the reaction aldehydo-D-ribose 5-phosphate + D-glyceraldehyde 3-phosphate + L-glutamine = pyridoxal 5'-phosphate + L-glutamate + phosphate + 3 H2O + H(+). The protein operates within cofactor biosynthesis; pyridoxal 5'-phosphate biosynthesis. In terms of biological role, catalyzes the formation of pyridoxal 5'-phosphate from ribose 5-phosphate (RBP), glyceraldehyde 3-phosphate (G3P) and ammonia. The ammonia is provided by the PdxT subunit. Can also use ribulose 5-phosphate and dihydroxyacetone phosphate as substrates, resulting from enzyme-catalyzed isomerization of RBP and G3P, respectively. The polypeptide is Pyridoxal 5'-phosphate synthase subunit PdxS (Bacillus subtilis (strain 168)).